Reading from the N-terminus, the 373-residue chain is 3-dehydroquinate synthase (373 aa).

Residues 67 to 72, 101 to 105, 125 to 126, K138, and K147 each bind NAD(+); these read EGEETK, GVILD, and TT. Residues E180, H240, and H256 each contribute to the Zn(2+) site.

It belongs to the sugar phosphate cyclases superfamily. Dehydroquinate synthase family. The cofactor is NAD(+). Co(2+) is required as a cofactor. Zn(2+) serves as cofactor.

Its subcellular location is the cytoplasm. It catalyses the reaction 7-phospho-2-dehydro-3-deoxy-D-arabino-heptonate = 3-dehydroquinate + phosphate. Its pathway is metabolic intermediate biosynthesis; chorismate biosynthesis; chorismate from D-erythrose 4-phosphate and phosphoenolpyruvate: step 2/7. Functionally, catalyzes the conversion of 3-deoxy-D-arabino-heptulosonate 7-phosphate (DAHP) to dehydroquinate (DHQ). The protein is 3-dehydroquinate synthase of Chlamydia trachomatis serovar L2 (strain ATCC VR-902B / DSM 19102 / 434/Bu).